The following is a 249-amino-acid chain: Uridylate kinase (249 aa).

19–22 provides a ligand contact to ATP; it reads KLSG. G61 contributes to the UMP binding site. Positions 62 and 66 each coordinate ATP. UMP is bound by residues D81 and 142 to 149; that span reads TGNPYFTT. T169, Y175, and D178 together coordinate ATP.

The protein belongs to the UMP kinase family. Homohexamer.

It is found in the cytoplasm. The catalysed reaction is UMP + ATP = UDP + ADP. Its pathway is pyrimidine metabolism; CTP biosynthesis via de novo pathway; UDP from UMP (UMPK route): step 1/1. With respect to regulation, inhibited by UTP. Catalyzes the reversible phosphorylation of UMP to UDP. The polypeptide is Uridylate kinase (Anaeromyxobacter sp. (strain Fw109-5)).